The chain runs to 232 residues: Chalcone--flavanone isomerase (232 aa).

Residues Thr-50 and Ser-192 each coordinate substrate.

It belongs to the chalcone isomerase family.

It carries out the reaction a chalcone = a flavanone.. The protein operates within secondary metabolite biosynthesis; flavonoid biosynthesis. In terms of biological role, catalyzes the intramolecular cyclization of bicyclic chalcones into tricyclic (S)-flavanones. Responsible for the isomerization of 4,2',4',6'-tetrahydroxychalcone (also termed chalcone) into naringenin. This Saussurea medusa (Saw-wort) protein is Chalcone--flavanone isomerase (CHI).